Reading from the N-terminus, the 105-residue chain is Extracellular guanyl-specific ribonuclease Fl1 (105 aa).

2 disulfides stabilise this stretch: Cys-5-Cys-101 and Cys-23-Cys-82. Residue His-39 is part of the active site. The active-site Proton acceptor is the Glu-57. His-90 serves as the catalytic Proton donor.

Belongs to the ribonuclease N1/T1 family.

It carries out the reaction [RNA] containing guanosine + H2O = an [RNA fragment]-3'-guanosine-3'-phosphate + a 5'-hydroxy-ribonucleotide-3'-[RNA fragment].. This is Extracellular guanyl-specific ribonuclease Fl1 from Gibberella baccata (Fusarium lateritium).